We begin with the raw amino-acid sequence, 278 residues long: ATP synthase subunit delta (278 aa).

Belongs to the ATPase delta chain family. F-type ATPases have 2 components, F(1) - the catalytic core - and F(0) - the membrane proton channel. F(1) has five subunits: alpha(3), beta(3), gamma(1), delta(1), epsilon(1). F(0) has three main subunits: a(1), b(2) and c(10-14). The alpha and beta chains form an alternating ring which encloses part of the gamma chain. F(1) is attached to F(0) by a central stalk formed by the gamma and epsilon chains, while a peripheral stalk is formed by the delta and b chains.

It is found in the cell membrane. Its function is as follows. F(1)F(0) ATP synthase produces ATP from ADP in the presence of a proton or sodium gradient. F-type ATPases consist of two structural domains, F(1) containing the extramembraneous catalytic core and F(0) containing the membrane proton channel, linked together by a central stalk and a peripheral stalk. During catalysis, ATP synthesis in the catalytic domain of F(1) is coupled via a rotary mechanism of the central stalk subunits to proton translocation. This protein is part of the stalk that links CF(0) to CF(1). It either transmits conformational changes from CF(0) to CF(1) or is implicated in proton conduction. The sequence is that of ATP synthase subunit delta from Bifidobacterium longum (strain DJO10A).